A 396-amino-acid polypeptide reads, in one-letter code: Anhydro-N-acetylmuramic acid kinase (396 aa).

19 to 26 lines the ATP pocket; the sequence is GTSADGID.

It belongs to the anhydro-N-acetylmuramic acid kinase family.

The enzyme catalyses 1,6-anhydro-N-acetyl-beta-muramate + ATP + H2O = N-acetyl-D-muramate 6-phosphate + ADP + H(+). The protein operates within amino-sugar metabolism; 1,6-anhydro-N-acetylmuramate degradation. It functions in the pathway cell wall biogenesis; peptidoglycan recycling. In terms of biological role, catalyzes the specific phosphorylation of 1,6-anhydro-N-acetylmuramic acid (anhMurNAc) with the simultaneous cleavage of the 1,6-anhydro ring, generating MurNAc-6-P. Is required for the utilization of anhMurNAc either imported from the medium or derived from its own cell wall murein, and thus plays a role in cell wall recycling. This is Anhydro-N-acetylmuramic acid kinase from Colwellia psychrerythraea (strain 34H / ATCC BAA-681) (Vibrio psychroerythus).